Here is a 477-residue protein sequence, read N- to C-terminus: Oleate hydroxylase FAH12 (477 aa).

The segment at 26-48 (YESSAAVSPAESPRTSASSTSLS) is disordered. The span at 27–48 (ESSAAVSPAESPRTSASSTSLS) shows a compositional bias: low complexity. 2 helical membrane-spanning segments follow: residues 101 to 118 (AYVL…YLFH) and 133 to 153 (FVLW…LWVI). A Histidine box-1 motif is present at residues 155-159 (HECGH). Residues 167–187 (FISDLTGWVIHSALLVPYFSW) traverse the membrane as a helical segment. A Histidine box-2 motif is present at residues 191–195 (HSAHH). 3 helical membrane passes run 234 to 254 (PIYT…SYLM), 299 to 319 (YIVL…YLGN), and 327 to 347 (AVWY…ITFL).

The protein belongs to the fatty acid desaturase type 1 family.

Its subcellular location is the microsome membrane. It catalyses the reaction (9Z)-octadecenoate + AH2 + O2 = (12R)-hydroxy-(9Z)-octadecenoate + A + H2O. It functions in the pathway lipid metabolism; monounsaturated fatty acid biosynthesis. In terms of biological role, oleate hydroxylase involved in the biosynthesis of ricinoleate (12-hydroxy-cis-9-octadecenoate), that is present at high levels in C.purpurea sclerotium tissue. Exhibits delta(12) hydroxylase activity on 16C and 18C monounsaturated fatty acids (i.e. oleic and palmitoleic acids), and, to a lower extent, gamma(3) hydroxylase activity on ricinoleate. The protein is Oleate hydroxylase FAH12 of Claviceps purpurea (Ergot fungus).